Consider the following 99-residue polypeptide: uncharacterized protein (99 aa).

2 disordered regions span residues 1-24 and 49-99; these read MKAT…VRAT and SVRT…RCAT. Composition is skewed to basic residues over residues 15–24 and 71–81; these read VRRRRRVRAT and SRRRGRPRSSR.

This is an uncharacterized protein from Streptomyces fradiae (Streptomyces roseoflavus).